Here is a 293-residue protein sequence, read N- to C-terminus: 4-diphosphocytidyl-2-C-methyl-D-erythritol kinase (293 aa).

K16 is a catalytic residue. 99-109 (PMGAGLGGGSS) provides a ligand contact to ATP. Residue D141 is part of the active site.

It belongs to the GHMP kinase family. IspE subfamily.

The catalysed reaction is 4-CDP-2-C-methyl-D-erythritol + ATP = 4-CDP-2-C-methyl-D-erythritol 2-phosphate + ADP + H(+). Its pathway is isoprenoid biosynthesis; isopentenyl diphosphate biosynthesis via DXP pathway; isopentenyl diphosphate from 1-deoxy-D-xylulose 5-phosphate: step 3/6. Its function is as follows. Catalyzes the phosphorylation of the position 2 hydroxy group of 4-diphosphocytidyl-2C-methyl-D-erythritol. This is 4-diphosphocytidyl-2-C-methyl-D-erythritol kinase from Paraburkholderia xenovorans (strain LB400).